The following is a 236-amino-acid chain: Purine nucleoside phosphorylase DeoD-type (236 aa).

His-5 lines the a purine D-ribonucleoside pocket. Residues Gly-21, Arg-25, Arg-44, and 88 to 91 (RVGT) each bind phosphate. A purine D-ribonucleoside-binding positions include 180–182 (EME) and 204–205 (SD). The active-site Proton donor is Asp-205.

Belongs to the PNP/UDP phosphorylase family. As to quaternary structure, homohexamer; trimer of homodimers.

The enzyme catalyses a purine D-ribonucleoside + phosphate = a purine nucleobase + alpha-D-ribose 1-phosphate. It catalyses the reaction a purine 2'-deoxy-D-ribonucleoside + phosphate = a purine nucleobase + 2-deoxy-alpha-D-ribose 1-phosphate. Catalyzes the reversible phosphorolytic breakdown of the N-glycosidic bond in the beta-(deoxy)ribonucleoside molecules, with the formation of the corresponding free purine bases and pentose-1-phosphate. In Shewanella sp. (strain MR-4), this protein is Purine nucleoside phosphorylase DeoD-type.